The sequence spans 118 residues: MGVSKVAIAVAVMLMVVVINHPAVVEGLTCGQVTGKLGGCLGYLKGGGYPSPACCGGVKGLNSLAKTPADRKQACACLKTLAGSVKGINYGAASALPGKCGIRIPYPISPSTDCSRVN.

The N-terminal stretch at 1–27 (MGVSKVAIAVAVMLMVVVINHPAVVEG) is a signal peptide. Cystine bridges form between C30-C75, C40-C54, C55-C100, and C77-C114.

It belongs to the plant LTP family. Disulfide bonds.

In terms of biological role, plant non-specific lipid-transfer proteins transfer phospholipids as well as galactolipids across membranes. May play a role in wax or cutin deposition in the cell walls of expanding epidermal cells and certain secretory tissues. This chain is Non-specific lipid-transfer protein, found in Apium graveolens (Celery).